Consider the following 899-residue polypeptide: Probable dipeptidyl-aminopeptidase B (899 aa).

2 disordered regions span residues 1–37 and 51–84; these read MARK…SDGS and KITR…TENS. Residues 1-91 are Cytoplasmic-facing; sequence MARKDKDNGP…ENSKRNRGSR (91 aa). Residues 22-37 show a composition bias toward low complexity; sequence SSASFSSTDSLSSDGS. The segment covering 61–74 has biased composition (basic and acidic residues); that stretch reads NPYRDDDVELERGD. Residues 92 to 112 form a helical; Signal-anchor for type II membrane protein membrane-spanning segment; that stretch reads LIWVVGLLCLGGWILAFVLFW. Residues 113-899 are Vacuolar-facing; it reads GRRNSELSSS…QQGNSVLPVT (787 aa). Asn149, Asn194, Asn347, Asn409, Asn513, Asn638, and Asn643 each carry an N-linked (GlcNAc...) asparagine glycan. Ser752 serves as the catalytic Charge relay system. N-linked (GlcNAc...) asparagine glycosylation is present at Asn811. Active-site charge relay system residues include Asp829 and His862.

It belongs to the peptidase S9B family.

It localises to the vacuole membrane. The enzyme catalyses Release of an N-terminal dipeptide, Xaa-Yaa-|-Zaa-, from a polypeptide, preferentially when Yaa is Pro, provided Zaa is neither Pro nor hydroxyproline.. Type IV dipeptidyl-peptidase which removes N-terminal dipeptides sequentially from polypeptides having unsubstituted N-termini provided that the penultimate residue is proline. This is Probable dipeptidyl-aminopeptidase B (dapB) from Talaromyces marneffei (strain ATCC 18224 / CBS 334.59 / QM 7333) (Penicillium marneffei).